A 664-amino-acid polypeptide reads, in one-letter code: DNA ligase (664 aa).

Residues 32 to 36 (DKEYD) and 80 to 81 (SL) contribute to the NAD(+) site. The active-site N6-AMP-lysine intermediate is Lys-122. Arg-144, Glu-178, and Lys-314 together coordinate NAD(+). Zn(2+) is bound by residues Cys-407, Cys-410, Cys-423, and Cys-429. The region spanning 587–664 (IDENPFMGKT…NEEEFSNKIK (78 aa)) is the BRCT domain.

This sequence belongs to the NAD-dependent DNA ligase family. LigA subfamily. Mg(2+) serves as cofactor. It depends on Mn(2+) as a cofactor.

The enzyme catalyses NAD(+) + (deoxyribonucleotide)n-3'-hydroxyl + 5'-phospho-(deoxyribonucleotide)m = (deoxyribonucleotide)n+m + AMP + beta-nicotinamide D-nucleotide.. DNA ligase that catalyzes the formation of phosphodiester linkages between 5'-phosphoryl and 3'-hydroxyl groups in double-stranded DNA using NAD as a coenzyme and as the energy source for the reaction. It is essential for DNA replication and repair of damaged DNA. This chain is DNA ligase, found in Clostridium botulinum (strain 657 / Type Ba4).